The primary structure comprises 289 residues: Thymidylate synthase (289 aa).

DUMP-binding positions include Arg26 and 151–152 (RR). The active-site Nucleophile is Cys171. DUMP contacts are provided by residues 191–194 (RSGD), Asn202, and 232–234 (HVY). Residue Asp194 coordinates (6R)-5,10-methylene-5,6,7,8-tetrahydrofolate. Ala288 contacts (6R)-5,10-methylene-5,6,7,8-tetrahydrofolate.

This sequence belongs to the thymidylate synthase family. As to quaternary structure, homodimer.

It catalyses the reaction dUMP + (6R)-5,10-methylene-5,6,7,8-tetrahydrofolate = 7,8-dihydrofolate + dTMP. The protein operates within pyrimidine metabolism; dTTP biosynthesis. The sequence is that of Thymidylate synthase from Equus caballus (Horse).